A 104-amino-acid chain; its full sequence is L-rhamnose mutarotase (104 aa).

Tyr18 provides a ligand contact to substrate. Residue His22 is the Proton donor of the active site. Residues Tyr41 and 76-77 contribute to the substrate site; that span reads WW.

It belongs to the rhamnose mutarotase family. As to quaternary structure, homodimer.

Its subcellular location is the cytoplasm. The catalysed reaction is alpha-L-rhamnose = beta-L-rhamnose. It participates in carbohydrate metabolism; L-rhamnose metabolism. Functionally, involved in the anomeric conversion of L-rhamnose. This Shigella dysenteriae serotype 1 (strain Sd197) protein is L-rhamnose mutarotase.